A 168-amino-acid chain; its full sequence is Small ribosomal subunit protein uS5 (168 aa).

The 64-residue stretch at 12–75 folds into the S5 DRBM domain; that stretch reads YQEKLVSVTR…DQAKKNMVYI (64 aa).

Belongs to the universal ribosomal protein uS5 family. In terms of assembly, part of the 30S ribosomal subunit. Contacts proteins S4 and S8.

Functionally, with S4 and S12 plays an important role in translational accuracy. Located at the back of the 30S subunit body where it stabilizes the conformation of the head with respect to the body. This is Small ribosomal subunit protein uS5 from Legionella pneumophila (strain Paris).